Reading from the N-terminus, the 546-residue chain is Chaperonin GroEL (546 aa).

Residues 29 to 32 (TLGP), Lys50, 86 to 90 (DGTTT), Gly414, and Asp495 contribute to the ATP site. The tract at residues 526–546 (AKEGAPAGGGMPDMGGMGGMM) is disordered. Residues 531–546 (PAGGGMPDMGGMGGMM) show a composition bias toward gly residues.

This sequence belongs to the chaperonin (HSP60) family. In terms of assembly, forms a cylinder of 14 subunits composed of two heptameric rings stacked back-to-back. Interacts with the co-chaperonin GroES.

The protein localises to the cytoplasm. The enzyme catalyses ATP + H2O + a folded polypeptide = ADP + phosphate + an unfolded polypeptide.. Together with its co-chaperonin GroES, plays an essential role in assisting protein folding. The GroEL-GroES system forms a nano-cage that allows encapsulation of the non-native substrate proteins and provides a physical environment optimized to promote and accelerate protein folding. This Jannaschia sp. (strain CCS1) protein is Chaperonin GroEL.